Reading from the N-terminus, the 1429-residue chain is Nitric oxide synthase 1 (1429 aa).

The tract at residues 1-200 (MEENTFGVQQ…LQDIGEHDEL (200 aa)) is interaction with NOSIP. A PDZ domain is found at 17–99 (SVRLFKRKVG…ETHVVLILRG (83 aa)). Disordered stretches follow at residues 152–174 (VTGLGNGPQHAQGHGQGAGSVSQ), 214–255 (GSKA…DNDR), and 271–298 (NNPYSEKEQSPTSGKQSPTKNGSPSRCP). The span at 160–174 (QHAQGHGQGAGSVSQ) shows a compositional bias: low complexity. Residues 163–240 (QGHGQGAGSV…TGIQVDRDLD (78 aa)) form an interaction with DYNLL1/PIN region. The span at 226–243 (AEMKDTGIQVDRDLDGKS) shows a compositional bias: basic and acidic residues. Position 280 is a phosphoserine (Ser280). Over residues 280 to 294 (SPTSGKQSPTKNGSP) the composition is skewed to polar residues. Position 334 (Ser334) interacts with (6R)-L-erythro-5,6,7,8-tetrahydrobiopterin. Residue Cys415 participates in heme b binding. L-arginine contacts are provided by Gln478, Trp587, Tyr588, and Glu592. Residues Val677, Trp678, and Phe691 each coordinate (6R)-L-erythro-5,6,7,8-tetrahydrobiopterin. Tyr706 is a heme b binding site. The segment at 725–745 (KRRAIGFKKLAEAVKFSAKLM) is calmodulin-binding. In terms of domain architecture, Flavodoxin-like spans 755 to 935 (ATILYATETG…AFRTWAKKVF (181 aa)). FMN contacts are provided by Thr761, Glu762, Thr763, Lys765, Ser766, Ser807, Thr808, and Gly812. A phosphoserine mark is found at Ser847, Ser857, and Ser858. Ser886, His891, Cys893, Glu919, and Gln923 together coordinate FMN. Positions 990-1237 (KRVSAARLLS…VRGAPSFHLP (248 aa)) constitute an FAD-binding FR-type domain. An NADP(+)-binding site is contributed by Arg1010. Residues His1032, Arg1173, Tyr1174, Tyr1175, Ser1176, Thr1191, and Ala1193 each contribute to the FAD site. Ser1196 is an NADP(+) binding site. 4 residues coordinate FAD: Tyr1197, Val1210, Cys1211, and Ser1212. Residues Thr1251, Arg1284, Ser1313, Arg1314, Lys1320, Tyr1322, Gln1324, Asp1357, Thr1398, and Arg1400 each coordinate NADP(+).

This sequence belongs to the NOS family. In terms of assembly, homodimer. Interacts with DLG4 (via N-terminal tandem pair of PDZ domains); the interaction possibly being prevented by the association between NOS1 and CAPON. Forms a ternary complex with CAPON and RASD1. Forms a ternary complex with CAPON and SYN1. Interacts with ZDHHC23. Interacts with NOSIP; which may impair its synaptic location. Interacts with HTR4. Interacts with SLC6A4. Interacts with VAC14. Forms a complex with ASL, ASS1 and SLC7A1; the complex regulates cell-autonomous L-arginine synthesis and citrulline recycling while channeling extracellular L-arginine to nitric oxide synthesis pathway. Interacts with DMD; localizes NOS1 to sarcolemma in muscle cells. Interacts with DYNLL1; inhibits the nitric oxide synthase activity. The cofactor is heme b. FAD serves as cofactor. FMN is required as a cofactor. Requires (6R)-L-erythro-5,6,7,8-tetrahydrobiopterin as cofactor. In terms of processing, ubiquitinated; mediated by STUB1/CHIP in the presence of Hsp70 and Hsp40 (in vitro). In terms of tissue distribution, isoform N-NOS-1 is expressed in brain and colorectum. Found in the Auerbach's plexus of the enteric nervous system. Isoform PNNOS is expressed in the penis, urethra, prostate, and skeletal muscle, and coexists with the cerebellar nnos in the pelvic plexus, bladder and liver, and is detectable in the cerebellum.

Its subcellular location is the cell membrane. The protein localises to the sarcolemma. It localises to the cell projection. The protein resides in the dendritic spine. The catalysed reaction is 2 L-arginine + 3 NADPH + 4 O2 + H(+) = 2 L-citrulline + 2 nitric oxide + 3 NADP(+) + 4 H2O. Stimulated by calcium/calmodulin. Inhibited by DYNLL1 that prevents the dimerization of the protein. Inhibited by NOSIP. Functionally, produces nitric oxide (NO) which is a messenger molecule with diverse functions throughout the body. In the brain and peripheral nervous system, NO displays many properties of a neurotransmitter. Inhibitory transmitter for non-adrenergic and non-cholinergic nerves in the colorectum. Probably has nitrosylase activity and mediates cysteine S-nitrosylation of cytoplasmic target proteins such SRR. Inhibitory transmitter for non-adrenergic and non-cholinergic nerves in the colorectum. This Rattus norvegicus (Rat) protein is Nitric oxide synthase 1.